A 517-amino-acid chain; its full sequence is Tyrosine-protein kinase Fgr (517 aa).

The N-myristoyl glycine moiety is linked to residue Gly-2. S-palmitoyl cysteine attachment occurs at residues Cys-3 and Cys-6. Ser-13 carries the phosphoserine modification. Tyr-32 carries the phosphotyrosine modification. Ser-50 carries the post-translational modification Phosphoserine. Residues 65–126 form the SH3 domain; sequence TGVTIFVALY…PSNYVAPVDS (62 aa). Residues 102–103 form an interaction with CLNK region; the sequence is WW. Residues 132–229 form the SH2 domain; it reads WYFGKISRKD…GLCYLLTAPC (98 aa). Tyr-196 carries the phosphotyrosine modification. The residue at position 206 (Ser-206) is a Phosphoserine. Residues 251-504 form the Protein kinase domain; that stretch reads IALERRLGTG…YLQSFLEDYF (254 aa). ATP-binding positions include 257–265 and Lys-279; that span reads LGTGCFGDV. The active-site Proton acceptor is Asp-370. Tyr-400 is subject to Phosphotyrosine. Tyr-511 is subject to Phosphotyrosine; by SRC.

This sequence belongs to the protein kinase superfamily. Tyr protein kinase family. SRC subfamily. As to quaternary structure, interacts with ITGB1, ITGB2, MS4A2/FCER1B, FCER1G and FCGR2. Interacts (via SH2 domain) with SYK (tyrosine phosphorylated). Interacts (via SH2 domain) with FLT3 (tyrosine phosphorylated). Interacts with PTK2/FAK1. Interacts (via SH2 domain) with HCLS1 (tyrosine phosphorylated by SYK). Interacts with SIRPA and PTPNS1. Interacts (not phosphorylated on tyrosine residues) with CBL; FGR tyrosine phosphorylation promotes dissociation. Interacts with CLNK. Ubiquitinated. Becomes ubiquitinated in response to ITGB2 signaling; this does not lead to degradation. In terms of processing, phosphorylated. Autophosphorylated on tyrosine residues. Becomes phosphorylated in response to FCGR2 engagement, cell adhesion and signaling by ITGB2. Prior phosphorylation at Tyr-511 by SRC inhibits ulterior autophosphorylation at Tyr-400. Expressed in natural killer cells (at protein level).

The protein resides in the cell membrane. Its subcellular location is the cell projection. It is found in the ruffle membrane. It localises to the cytoplasm. The protein localises to the cytosol. The protein resides in the cytoskeleton. Its subcellular location is the mitochondrion inner membrane. It is found in the mitochondrion intermembrane space. It carries out the reaction L-tyrosyl-[protein] + ATP = O-phospho-L-tyrosyl-[protein] + ADP + H(+). Its activity is regulated as follows. Activated by autophosphorylation. Prior phosphorylation at Tyr-511 by SRC inhibits ulterior autophosphorylation at Tyr-400. Activated by phorbol myristate acetate, phosphatidic acid and poly-Lys. Binding (via SH2 domain) of HCLS1 that is already phosphorylated by SYK strongly increases kinase activity. Its function is as follows. Non-receptor tyrosine-protein kinase that transmits signals from cell surface receptors devoid of kinase activity and contributes to the regulation of immune responses, including neutrophil, monocyte, macrophage and mast cell functions, cytoskeleton remodeling in response to extracellular stimuli, phagocytosis, cell adhesion and migration. Promotes mast cell degranulation, release of inflammatory cytokines and IgE-mediated anaphylaxis. Acts downstream of receptors that bind the Fc region of immunoglobulins, such as MS4A2/FCER1B, FCER1G and FCGR2. Acts downstream of ITGB1 and ITGB2, and regulates actin cytoskeleton reorganization, cell spreading and adhesion. Depending on the context, activates or inhibits cellular responses. Functions as a negative regulator of ITGB2 signaling, phagocytosis and SYK activity in monocytes. Required for normal ITGB1 and ITGB2 signaling, normal cell spreading and adhesion in neutrophils and macrophages. Functions as a positive regulator of cell migration and regulates cytoskeleton reorganization via RAC1 activation. Phosphorylates SYK (in vitro) and promotes SYK-dependent activation of AKT1 and MAP kinase signaling. Phosphorylates PLD2 in antigen-stimulated mast cells, leading to PLD2 activation and the production of the signaling molecules lysophosphatidic acid and diacylglycerol. Promotes activation of PIK3R1. Phosphorylates FASLG, and thereby regulates its ubiquitination and subsequent internalization. Phosphorylates ABL1. Promotes phosphorylation of CBL, CTTN, PIK3R1, PTK2/FAK1, PTK2B/PYK2 and VAV2. Phosphorylates HCLS1 that has already been phosphorylated by SYK, but not unphosphorylated HCLS1. Together with CLNK, it acts as a negative regulator of natural killer cell-activating receptors and inhibits interferon-gamma production. In Mus musculus (Mouse), this protein is Tyrosine-protein kinase Fgr (Fgr).